Reading from the N-terminus, the 324-residue chain is MSASSVKKSQGMKFAEEQMHKHGWKEGKGLGRRENGICEAIKVKVKCDHAGVGHNSAEQFTFHWWDHVFNKTASSISVEADQDGVTVNRVKDEDAPVTNKKPRKALSNKNMLYGRFVKSATLLSGGEQPVKEPSSSESSDSSGDEDEKLDLSSATKLTDEDLKKVCGGRTAHKGARHGLTMSAKLSRLEEQEREFLAKYGKKEQKNKERDEKLERTQGLPGMNIQQIYSEEGIETNISHESSQHKKKKKKRKRADSERKEESQENGHEEEQMPPSEQEVKSSKKKKSKKKQREESPSTQEEQPTESSDFSMKPKKKKKKKNKSE.

Disordered regions lie at residues 1–30 (MSAS…GKGL) and 123–324 (LSGG…NKSE). Residues 11-57 (GMKFAEEQMHKHGWKEGKGLGRRENGICEAIKVKVKCDHAGVGHNSA) enclose the G-patch domain. The span at 14–30 (FAEEQMHKHGWKEGKGL) shows a compositional bias: basic and acidic residues. Over residues 131–141 (KEPSSSESSDS) the composition is skewed to low complexity. A compositionally biased stretch (basic and acidic residues) spans 186–215 (SRLEEQEREFLAKYGKKEQKNKERDEKLER). Residues 244-253 (HKKKKKKRKR) show a composition bias toward basic residues. Residues 254-270 (ADSERKEESQENGHEEE) show a composition bias toward basic and acidic residues. Residues 296–309 (PSTQEEQPTESSDF) are compositionally biased toward polar residues. A compositionally biased stretch (basic residues) spans 312–324 (KPKKKKKKKNKSE).

This Xenopus laevis (African clawed frog) protein is G patch domain-containing protein 4 (gpatch4).